Consider the following 879-residue polypeptide: Alanine--tRNA ligase (879 aa).

Zn(2+)-binding residues include His566, His570, Cys668, and His672.

It belongs to the class-II aminoacyl-tRNA synthetase family. It depends on Zn(2+) as a cofactor.

It localises to the cytoplasm. It catalyses the reaction tRNA(Ala) + L-alanine + ATP = L-alanyl-tRNA(Ala) + AMP + diphosphate. In terms of biological role, catalyzes the attachment of alanine to tRNA(Ala) in a two-step reaction: alanine is first activated by ATP to form Ala-AMP and then transferred to the acceptor end of tRNA(Ala). Also edits incorrectly charged Ser-tRNA(Ala) and Gly-tRNA(Ala) via its editing domain. The chain is Alanine--tRNA ligase from Listeria monocytogenes serotype 4b (strain F2365).